A 506-amino-acid chain; its full sequence is ATP-dependent rRNA helicase RRP3 (506 aa).

2 disordered regions span residues 1-22 and 37-88; these read MSGK…KSKE and NQKK…FESF. Over residues 49-69 the composition is skewed to acidic residues; sequence SDQEDDPSESEEEEGSDSEDV. Residues 86 to 114 carry the Q motif motif; the sequence is ESFSDLDLVPELIEACKNLNFAKPTPIQA. Residues 117–289 enclose the Helicase ATP-binding domain; the sequence is IPPALQGHDI…RASLTNPVKC (173 aa). Residue 130 to 137 coordinates ATP; it reads AQTGSGKT. The DEAD box signature appears at 236 to 239; sequence DEAD. Residues 312-460 enclose the Helicase C-terminal domain; the sequence is LKNTYLIYLM…KENVNKDAIL (149 aa). The segment at 485-506 is disordered; that stretch reads IARGKGRRGRMAARDDMDKGER. A compositionally biased stretch (basic and acidic residues) spans 496 to 506; it reads AARDDMDKGER.

Belongs to the DEAD box helicase family. DDX47/RRP3 subfamily. Interacts with the SSU processome.

It localises to the nucleus. The catalysed reaction is ATP + H2O = ADP + phosphate + H(+). Its function is as follows. ATP-dependent rRNA helicase required for pre-ribosomal RNA processing. Involved in the maturation of the 35S-pre-rRNA and to its cleavage to mature 18S rRNA. This Vanderwaltozyma polyspora (strain ATCC 22028 / DSM 70294 / BCRC 21397 / CBS 2163 / NBRC 10782 / NRRL Y-8283 / UCD 57-17) (Kluyveromyces polysporus) protein is ATP-dependent rRNA helicase RRP3.